Consider the following 730-residue polypeptide: Trimethylamine dehydrogenase (730 aa).

FMN-binding residues include P29, C31, Y61, and E104. An S-6-FMN cysteine modification is found at C31. 170 to 173 (YGAH) serves as a coordination point for substrate. Y175 serves as the catalytic Proton donor. FMN-binding residues include R223, D268, R300, A322, and R323. 4 residues coordinate [4Fe-4S] cluster: C346, C349, C352, and C365. Positions 401, 420, 421, 428, 471, and 675 each coordinate ADP.

In the N-terminal section; belongs to the NADH:flavin oxidoreductase/NADH oxidase family. As to quaternary structure, homodimer. Forms a ternary complex with the heterodimeric electron transfer flavoprotein. FMN serves as cofactor. The cofactor is [4Fe-4S] cluster.

It carries out the reaction trimethylamine + oxidized [electron-transfer flavoprotein] + H2O + H(+) = dimethylamine + reduced [electron-transfer flavoprotein] + formaldehyde. The sequence is that of Trimethylamine dehydrogenase from Methylophilus methylotrophus (Bacterium W3A1).